The primary structure comprises 815 residues: Lon protease 1 (815 aa).

In terms of domain architecture, Lon N-terminal spans 14–211 (IAILPLLGTV…KLNEVLTREL (198 aa)). 370–377 (GPPGVGKT) lines the ATP pocket. A Lon proteolytic domain is found at 606 to 787 (TDRPGIVTGL…GQVIELALRA (182 aa)). Active-site residues include serine 693 and lysine 736.

This sequence belongs to the peptidase S16 family. As to quaternary structure, homohexamer. Organized in a ring with a central cavity.

It localises to the cytoplasm. The catalysed reaction is Hydrolysis of proteins in presence of ATP.. Functionally, ATP-dependent serine protease that mediates the selective degradation of mutant and abnormal proteins as well as certain short-lived regulatory proteins. Required for cellular homeostasis and for survival from DNA damage and developmental changes induced by stress. Degrades polypeptides processively to yield small peptide fragments that are 5 to 10 amino acids long. Binds to DNA in a double-stranded, site-specific manner. The protein is Lon protease 1 of Herpetosiphon aurantiacus (strain ATCC 23779 / DSM 785 / 114-95).